The primary structure comprises 556 residues: Formate--tetrahydrofolate ligase (556 aa).

65-72 contributes to the ATP binding site; the sequence is TPAGEGKT.

It belongs to the formate--tetrahydrofolate ligase family.

It carries out the reaction (6S)-5,6,7,8-tetrahydrofolate + formate + ATP = (6R)-10-formyltetrahydrofolate + ADP + phosphate. It functions in the pathway one-carbon metabolism; tetrahydrofolate interconversion. The sequence is that of Formate--tetrahydrofolate ligase from Alkaliphilus oremlandii (strain OhILAs) (Clostridium oremlandii (strain OhILAs)).